An 87-amino-acid polypeptide reads, in one-letter code: HssA/B-like protein 54 (87 aa).

It belongs to the hssA/B family.

This chain is HssA/B-like protein 54 (hssl54), found in Dictyostelium discoideum (Social amoeba).